We begin with the raw amino-acid sequence, 1357 residues long: DNA-directed RNA polymerase subunit beta (1357 aa).

It belongs to the RNA polymerase beta chain family. In terms of assembly, the RNAP catalytic core consists of 2 alpha, 1 beta, 1 beta' and 1 omega subunit. When a sigma factor is associated with the core the holoenzyme is formed, which can initiate transcription.

The enzyme catalyses RNA(n) + a ribonucleoside 5'-triphosphate = RNA(n+1) + diphosphate. In terms of biological role, DNA-dependent RNA polymerase catalyzes the transcription of DNA into RNA using the four ribonucleoside triphosphates as substrates. The sequence is that of DNA-directed RNA polymerase subunit beta from Pseudomonas fluorescens (strain ATCC BAA-477 / NRRL B-23932 / Pf-5).